The following is a 540-amino-acid chain: Chaperonin GroEL (540 aa).

Residues 29-32 (TLGP), 86-90 (DGTTT), G413, 476-478 (NAA), and D492 contribute to the ATP site.

The protein belongs to the chaperonin (HSP60) family. As to quaternary structure, forms a cylinder of 14 subunits composed of two heptameric rings stacked back-to-back. Interacts with the co-chaperonin GroES.

Its subcellular location is the cytoplasm. It catalyses the reaction ATP + H2O + a folded polypeptide = ADP + phosphate + an unfolded polypeptide.. Its function is as follows. Together with its co-chaperonin GroES, plays an essential role in assisting protein folding. The GroEL-GroES system forms a nano-cage that allows encapsulation of the non-native substrate proteins and provides a physical environment optimized to promote and accelerate protein folding. The sequence is that of Chaperonin GroEL from Streptococcus pneumoniae (strain Hungary19A-6).